The chain runs to 210 residues: N-(5'-phosphoribosyl)anthranilate isomerase (210 aa).

Belongs to the TrpF family.

The enzyme catalyses N-(5-phospho-beta-D-ribosyl)anthranilate = 1-(2-carboxyphenylamino)-1-deoxy-D-ribulose 5-phosphate. The protein operates within amino-acid biosynthesis; L-tryptophan biosynthesis; L-tryptophan from chorismate: step 3/5. This is N-(5'-phosphoribosyl)anthranilate isomerase from Pseudomonas fluorescens (strain SBW25).